Consider the following 167-residue polypeptide: Probable glutathione peroxidase 8 (167 aa).

Cys41 is an active-site residue.

The protein belongs to the glutathione peroxidase family.

It catalyses the reaction 2 glutathione + H2O2 = glutathione disulfide + 2 H2O. In terms of biological role, may constitute a glutathione peroxidase-like protective system against oxidative stresses. This chain is Probable glutathione peroxidase 8 (GPX8), found in Arabidopsis thaliana (Mouse-ear cress).